Consider the following 212-residue polypeptide: Glycerol-3-phosphate acyltransferase (212 aa).

Transmembrane regions (helical) follow at residues 3–23, 69–89, 110–130, 143–163, and 165–185; these read LILL…LWIG, LLPM…FFAI, AGIL…IFFF, VIAA…HFLL, and DYDF…IIRH.

It belongs to the PlsY family. As to quaternary structure, probably interacts with PlsX.

It localises to the cell membrane. It catalyses the reaction an acyl phosphate + sn-glycerol 3-phosphate = a 1-acyl-sn-glycero-3-phosphate + phosphate. It participates in lipid metabolism; phospholipid metabolism. In terms of biological role, catalyzes the transfer of an acyl group from acyl-phosphate (acyl-PO(4)) to glycerol-3-phosphate (G3P) to form lysophosphatidic acid (LPA). This enzyme utilizes acyl-phosphate as fatty acyl donor, but not acyl-CoA or acyl-ACP. The sequence is that of Glycerol-3-phosphate acyltransferase from Streptococcus mutans serotype c (strain ATCC 700610 / UA159).